We begin with the raw amino-acid sequence, 388 residues long: Succinate--CoA ligase [ADP-forming] subunit beta (388 aa).

An ATP-grasp domain is found at 9 to 244 (KQLFARYGLP…QSQEDPREAQ (236 aa)). Residues lysine 46, 53–55 (GRG), glutamate 99, threonine 102, and glutamate 107 each bind ATP. Mg(2+) contacts are provided by asparagine 199 and aspartate 213. Residues asparagine 264 and 321-323 (GIV) each bind substrate.

The protein belongs to the succinate/malate CoA ligase beta subunit family. In terms of assembly, heterotetramer of two alpha and two beta subunits. The cofactor is Mg(2+).

It catalyses the reaction succinate + ATP + CoA = succinyl-CoA + ADP + phosphate. It carries out the reaction GTP + succinate + CoA = succinyl-CoA + GDP + phosphate. The protein operates within carbohydrate metabolism; tricarboxylic acid cycle; succinate from succinyl-CoA (ligase route): step 1/1. In terms of biological role, succinyl-CoA synthetase functions in the citric acid cycle (TCA), coupling the hydrolysis of succinyl-CoA to the synthesis of either ATP or GTP and thus represents the only step of substrate-level phosphorylation in the TCA. The beta subunit provides nucleotide specificity of the enzyme and binds the substrate succinate, while the binding sites for coenzyme A and phosphate are found in the alpha subunit. The polypeptide is Succinate--CoA ligase [ADP-forming] subunit beta (Salmonella choleraesuis (strain SC-B67)).